Reading from the N-terminus, the 339-residue chain is Uricase (339 aa).

Residues Lys-33 and Thr-78 each act as charge relay system in the active site. Urate is bound by residues Thr-78, Asp-79, Phe-201, Arg-218, Val-266, Gln-267, and Asn-293. His-295 functions as the Charge relay system in the catalytic mechanism. Residues 337-339 carry the Microbody targeting signal motif; that stretch reads SHL.

The protein belongs to the uricase family.

Its subcellular location is the peroxisome. It carries out the reaction urate + O2 + H2O = 5-hydroxyisourate + H2O2. It functions in the pathway purine metabolism; urate degradation; (S)-allantoin from urate: step 1/3. In terms of biological role, catalyzes the oxidation of uric acid to 5-hydroxyisourate, which is further processed to form (S)-allantoin. The sequence is that of Uricase (Uro) from Drosophila subobscura (Fruit fly).